Reading from the N-terminus, the 330-residue chain is Peroxidase 42 (330 aa).

An N-terminal signal peptide occupies residues 1–23; the sequence is MGGKGVMMVAILCLWALSATSEA. 4 disulfide bridges follow: Cys-40–Cys-119, Cys-73–Cys-78, Cys-125–Cys-323, and Cys-204–Cys-231. Residue His-71 is the Proton acceptor of the active site. Positions 72, 75, 79, and 81 each coordinate Ca(2+). A substrate-binding site is contributed by Pro-167. An N-linked (GlcNAc...) asparagine glycan is attached at Asn-170. His-197 lines the heme b pocket. Ser-198 is a Ca(2+) binding site. Ca(2+) is bound by residues Asp-247, Thr-250, and Asp-255.

The protein belongs to the peroxidase family. Classical plant (class III) peroxidase subfamily. Heme b serves as cofactor. Requires Ca(2+) as cofactor. Constitutively expressed in the whole plant, with the highest expression in roots.

The protein resides in the secreted. The catalysed reaction is 2 a phenolic donor + H2O2 = 2 a phenolic radical donor + 2 H2O. Removal of H(2)O(2), oxidation of toxic reductants, biosynthesis and degradation of lignin, suberization, auxin catabolism, response to environmental stresses such as wounding, pathogen attack and oxidative stress. These functions might be dependent on each isozyme/isoform in each plant tissue. Functionally, might function as heat shock-like defense protein. The chain is Peroxidase 42 (PER42) from Arabidopsis thaliana (Mouse-ear cress).